A 165-amino-acid polypeptide reads, in one-letter code: NADPH-dependent 7-cyano-7-deazaguanine reductase (165 aa).

Cys56 serves as the catalytic Thioimide intermediate. Asp63 acts as the Proton donor in catalysis. Substrate-binding positions include 78-80 (VES) and 97-98 (HE).

This sequence belongs to the GTP cyclohydrolase I family. QueF type 1 subfamily.

Its subcellular location is the cytoplasm. The catalysed reaction is 7-aminomethyl-7-carbaguanine + 2 NADP(+) = 7-cyano-7-deazaguanine + 2 NADPH + 3 H(+). The protein operates within tRNA modification; tRNA-queuosine biosynthesis. With respect to regulation, is totally inhibited by 4-aminobenzylcyanide in vitro. In terms of biological role, catalyzes the NADPH-dependent reduction of 7-cyano-7-deazaguanine (preQ0) to 7-aminomethyl-7-deazaguanine (preQ1), a late step in the queuosine pathway. Is highly specific for its natural substrate preQ0, since it cannot use various aliphatic, aromatic and heterocyclic nitriles, although it can reduce the substrate analog 5-cyanopyrrolo[2,3-d]pyrimidin-4-one with lesser efficiency. The sequence is that of NADPH-dependent 7-cyano-7-deazaguanine reductase from Geobacillus kaustophilus (strain HTA426).